The primary structure comprises 274 residues: Bis(5'-nucleosyl)-tetraphosphatase, symmetrical (274 aa).

Belongs to the Ap4A hydrolase family.

It catalyses the reaction P(1),P(4)-bis(5'-adenosyl) tetraphosphate + H2O = 2 ADP + 2 H(+). Hydrolyzes diadenosine 5',5'''-P1,P4-tetraphosphate to yield ADP. The sequence is that of Bis(5'-nucleosyl)-tetraphosphatase, symmetrical from Shewanella sp. (strain MR-4).